A 268-amino-acid polypeptide reads, in one-letter code: Nickel import ATP-binding protein NikE (268 aa).

One can recognise an ABC transporter domain in the interval 4–252; it reads LNVSDLSHHY…SSDAGRVLQN (249 aa). Residue 45–52 participates in ATP binding; the sequence is GRSGCGKS.

The protein belongs to the ABC transporter superfamily. Nickel importer (TC 3.A.1.5.3) family. The complex is composed of two ATP-binding proteins (NikD and NikE), two transmembrane proteins (NikB and NikC) and a solute-binding protein (NikA).

It localises to the cell inner membrane. It carries out the reaction Ni(2+)(out) + ATP + H2O = Ni(2+)(in) + ADP + phosphate + H(+). In terms of biological role, part of the ABC transporter complex NikABCDE involved in nickel import. Responsible for energy coupling to the transport system. The chain is Nickel import ATP-binding protein NikE from Escherichia coli O6:K15:H31 (strain 536 / UPEC).